Here is a 347-residue protein sequence, read N- to C-terminus: Cell division protein FtsQ (347 aa).

Residues 1 to 55 (MARNGNPQFPDERSTATRAKATEPEELDDRFSDLEPEEDSPFLRSQKRVPVRRGP) form a disordered region. Residues 1–66 (MARNGNPQFP…PSKKAANRVK (66 aa)) lie on the Cytoplasmic side of the membrane. Over residues 10 to 33 (PDERSTATRAKATEPEELDDRFSD) the composition is skewed to basic and acidic residues. A helical membrane pass occupies residues 67–87 (IALIVLGVLVVIGGVWMALSA). The Periplasmic segment spans residues 88–347 (YGEHSWRFRL…PTAHTSGRRH (260 aa)). Positions 98-166 (ESSDSIEVGG…DRIRVQVTER (69 aa)) constitute a POTRA domain. The tract at residues 308-347 (DSHPSAAKPTAPAVAPAVEKPAVAKPAVAKPTAHTSGRRH) is disordered. Residues 313–340 (AAKPTAPAVAPAVEKPAVAKPAVAKPTA) are compositionally biased toward low complexity.

The protein belongs to the FtsQ/DivIB family. FtsQ subfamily.

It localises to the cell inner membrane. In terms of biological role, essential cell division protein. The sequence is that of Cell division protein FtsQ from Koribacter versatilis (strain Ellin345).